A 1119-amino-acid chain; its full sequence is Leucine-rich repeats and immunoglobulin-like domains protein 3 (1119 aa).

A signal peptide spans 1-24 (MSAPSLRARAAGLGLLLCAVLGRA). The LRRNT domain maps to 38–74 (PSGVAAERPCPTTCRCLGDLLDCSRKRLARLPEPLPS). LRR repeat units follow at residues 75–96 (WVAR…SMSH), 99–120 (SLRE…GPVS), 122–142 (NITL…EHLK), 146–167 (SLET…FPAL), 168–189 (QLKY…YFDN), 193–214 (TLLV…MFKL), 216–237 (QLQH…TFQG), 240–261 (ALKS…AFWG), 264–285 (NMEI…WLYG), 288–309 (MLQE…AWEF), 312–333 (KLSE…SFLG), 336–357 (LLNT…AFRG), 360–382 (SLKT…NGAF), 387–408 (KLRR…AFTG), and 411–432 (ALEH…AFSQ). Asn122 and Asn156 each carry an N-linked (GlcNAc...) asparagine glycan. N-linked (GlcNAc...) asparagine glycosylation is present at Asn274. N-linked (GlcNAc...) asparagine glycans are attached at residues Asn442, Asn469, and Asn515. Residues 444 to 495 (SSLLCDCQLKWLPQWVAENNFQSFVNASCAHPQLLKGRSIFAVSPDGFVCDD) form the LRRCT domain. Ig-like C2-type domains are found at residues 499-598 (PQIT…AKLT), 603-692 (PSFT…ATLT), and 697-783 (PSFL…VRLS). Intrachain disulfides connect Cys520–Cys581 and Cys624–Cys676. Asn688 and Asn729 each carry an N-linked (GlcNAc...) asparagine glycan. The cysteines at positions 718 and 767 are disulfide-linked. A helical membrane pass occupies residues 810–830 (VVIIAVVCCVVGTSLVWVVII). N-linked (GlcNAc...) asparagine glycans are attached at residues Asn905, Asn987, Asn999, and Asn1016. Residues 1073 to 1093 (SSPDLDSGSEEDGKERTDFQE) form a disordered region. Positions 1083–1093 (EDGKERTDFQE) are enriched in basic and acidic residues.

In terms of assembly, interacts with EGFR, ERBB2 and ERBB4 (in vitro). In terms of tissue distribution, widely expressed.

Its subcellular location is the cell membrane. The protein resides in the cytoplasmic vesicle membrane. Functionally, may play a role in craniofacial and inner ear morphogenesis during embryonic development. May act within the otic vesicle epithelium to control formation of the lateral semicircular canal in the inner ear, possibly by restricting the expression of NTN1. This chain is Leucine-rich repeats and immunoglobulin-like domains protein 3 (LRIG3), found in Homo sapiens (Human).